The sequence spans 243 residues: Adenosylcobinamide-GDP ribazoletransferase (243 aa).

5 consecutive transmembrane segments (helical) span residues 31–51 (LLFY…FNAL), 55–75 (APLL…SGGL), 109–129 (IAVV…VALI), 135–155 (IGLL…FLGT), and 188–208 (VVLA…CFYW).

Belongs to the CobS family. Mg(2+) serves as cofactor.

It localises to the cell inner membrane. It catalyses the reaction alpha-ribazole + adenosylcob(III)inamide-GDP = adenosylcob(III)alamin + GMP + H(+). The catalysed reaction is alpha-ribazole 5'-phosphate + adenosylcob(III)inamide-GDP = adenosylcob(III)alamin 5'-phosphate + GMP + H(+). The protein operates within cofactor biosynthesis; adenosylcobalamin biosynthesis; adenosylcobalamin from cob(II)yrinate a,c-diamide: step 7/7. In terms of biological role, joins adenosylcobinamide-GDP and alpha-ribazole to generate adenosylcobalamin (Ado-cobalamin). Also synthesizes adenosylcobalamin 5'-phosphate from adenosylcobinamide-GDP and alpha-ribazole 5'-phosphate. In Pseudomonas syringae pv. tomato (strain ATCC BAA-871 / DC3000), this protein is Adenosylcobinamide-GDP ribazoletransferase.